A 125-amino-acid chain; its full sequence is Fumarate reductase subunit D (125 aa).

The next 3 membrane-spanning stretches (helical) occupy residues 30–50, 63–83, and 105–125; these read FAMITPITVLVLGILVPLGVI, FATSIIGALFIIGTLALPMWH, and IACYAFAGLISALAVVFIFMI.

The protein belongs to the FrdD family. In terms of assembly, part of an enzyme complex containing four subunits: a flavoprotein (FrdA), an iron-sulfur protein (FrdB), and two hydrophobic anchor proteins (FrdC and FrdD).

It is found in the cell inner membrane. Its function is as follows. Anchors the catalytic components of the fumarate reductase complex to the cell membrane, binds quinones. This Vibrio campbellii (strain ATCC BAA-1116) protein is Fumarate reductase subunit D.